We begin with the raw amino-acid sequence, 202 residues long: Recoverin (202 aa).

G2 carries N-myristoyl glycine lipidation. C39 is subject to Cysteine sulfenic acid (-SOH). EF-hand domains lie at 41 to 59 (SGRITKQEFQSIYSKFFPE), 61 to 96 (DPKAYAQHVFRSFDANSDGTLDFKEYVIALHMTSAG), 97 to 132 (KTNQKLEWAFSLYDVDGNGAISKSEVLEIVMAIFKM), and 147 to 182 (TPEKRAEKIWGFFGKKDDDKLTEEEFIEGTLANKEI). Ca(2+)-binding residues include D74, N76, D78, T80, E85, D110, D112, N114, and E121. Residues 189 to 192 (EPRK) are interaction with GRK1.

Belongs to the recoverin family. As to quaternary structure, homodimer; disulfide-linked. Homodimerization is caused by prolonged intense illumination. May form a complex composed of RHO, GRK1 and RCVRN in a Ca(2+)-dependent manner; RCVRN prevents the interaction between GRK1 and RHO. Interacts (via C-terminus) with GRK1 (via N-terminus); the interaction is Ca(2+)-dependent. Post-translationally, the N-terminal glycine is linked to one of four different types of acyl groups. The most abundant is myristoleate (14:1), but 14:0, 14:2, and 12:0 acyl residues are also present. The Ca(2+) induced exposure of the myristoyl group, known as the calcium-myristoyl switch, promotes RCVRN binding to the photoreceptor cell membranes only when intracellular Ca(2+) concentration is high. Oxidation on Cys-39 occurs in response to prolonged intense illumination and results in the formation of disulfide homodimers, and to a lesser extent disulfide-linked heterodimers.

The protein localises to the photoreceptor inner segment. It localises to the cell projection. The protein resides in the cilium. It is found in the photoreceptor outer segment. Its subcellular location is the photoreceptor outer segment membrane. The protein localises to the perikaryon. Functionally, acts as a calcium sensor and regulates phototransduction of cone and rod photoreceptor cells. Modulates light sensitivity of cone photoreceptor in dark and dim conditions. In response to high Ca(2+) levels induced by low light levels, prolongs RHO/rhodopsin activation in rod photoreceptor cells by binding to and inhibiting GRK1-mediated phosphorylation of RHO/rhodopsin. Plays a role in scotopic vision/enhances vision in dim light by enhancing signal transfer between rod photoreceptors and rod bipolar cells. Improves rod photoreceptor sensitivity in dim light and mediates response of rod photoreceptors to facilitate detection of change and motion in bright light. The protein is Recoverin (RCVRN) of Canis lupus familiaris (Dog).